Here is an 80-residue protein sequence, read N- to C-terminus: Large ribosomal subunit protein bL31B (80 aa).

Belongs to the bacterial ribosomal protein bL31 family. Type B subfamily. Part of the 50S ribosomal subunit.

The chain is Large ribosomal subunit protein bL31B from Streptococcus pneumoniae serotype 2 (strain D39 / NCTC 7466).